Consider the following 144-residue polypeptide: Large ribosomal subunit protein uL15 (144 aa).

The disordered stretch occupies residues 1-51; that stretch reads MRLNTIKPGAGSKSAGKRVGRGIGSGLGKTCGRGHKGQKSRAGGFHKVGFE. The segment covering 21–31 has biased composition (gly residues); it reads RGIGSGLGKTC.

This sequence belongs to the universal ribosomal protein uL15 family. In terms of assembly, part of the 50S ribosomal subunit.

Binds to the 23S rRNA. This Azoarcus sp. (strain BH72) protein is Large ribosomal subunit protein uL15.